Here is a 398-residue protein sequence, read N- to C-terminus: Acetylornithine aminotransferase (398 aa).

Residue Phe-129 participates in pyridoxal 5'-phosphate binding. Residue Arg-132 participates in N(2)-acetyl-L-ornithine binding. 214–217 (DEVQ) contacts pyridoxal 5'-phosphate. Residue Lys-243 is modified to N6-(pyridoxal phosphate)lysine. Ser-271 provides a ligand contact to N(2)-acetyl-L-ornithine. Thr-272 serves as a coordination point for pyridoxal 5'-phosphate.

It belongs to the class-III pyridoxal-phosphate-dependent aminotransferase family. ArgD subfamily. Homodimer. Pyridoxal 5'-phosphate is required as a cofactor.

Its subcellular location is the cytoplasm. The enzyme catalyses N(2)-acetyl-L-ornithine + 2-oxoglutarate = N-acetyl-L-glutamate 5-semialdehyde + L-glutamate. It functions in the pathway amino-acid biosynthesis; L-arginine biosynthesis; N(2)-acetyl-L-ornithine from L-glutamate: step 4/4. The protein is Acetylornithine aminotransferase of Neisseria meningitidis serogroup B (strain ATCC BAA-335 / MC58).